The sequence spans 447 residues: MGEDTDTRKINHSFLRDHSYVTEADIISTVEFNHTGELLATGDKGGRVVIFQREPESKNAPHSQGEYDVYSTFQSHEPEFDYLKSLEIEEKINKIKWLPQQNAAHSLLSTNDKTIKLWKITERDKRPEGYNLKDEEGKLKDLSTVTSLQVPVLKPMDLMVEVSPRRIFANGHTYHINSISVNSDCETYMSADDLRINLWHLAVTDRSFNIVDIKPANMEDLTEVITASEFHPHHCNLFVYSSSKGSLRLCDMRAAALCDKHSKLFEEPEDPSNRSFFSEIISSVSDVKFSHSGRYMLTRDYLTVKVWDLNMEARPIETYQVHDYLRSKLCSLYENDCIFDKFECAWNGSDSVIMTGAYNNFFRMFDRNTKRDVTLEASRESSKPRAVLKPRRVCVGGKRRRDDISVDSLDFTKKILHTAWHPAENIIAIAATNNLYIFQDKVNSDVH.

7 WD repeats span residues 22–61 (TEAD…KNAP), 87–128 (EIEE…KRPE), 171–209 (GHTY…RSFN), 220–260 (DLTE…LCDK), 279–317 (EIIS…RPIE), 334–375 (ENDC…DVTL), and 410–446 (DFTK…NSDV).

Belongs to the phosphatase 2A regulatory subunit B family. As to quaternary structure, PP2A consists of a common heterodimeric core enzyme, composed of a 36 kDa catalytic subunit (subunit C) and a 65 kDa constant regulatory subunit (PR65 or subunit A), that associates with a variety of regulatory subunits. Proteins that associate with the core dimer include three families of regulatory subunits B (the R2/B/PR55/B55, R3/B''/PR72/PR130/PR59 and R5/B'/B56 families), the 48 kDa variable regulatory subunit, viral proteins, and cell signaling molecules. Interacts with IER5. As to expression, highly expressed in brain.

In terms of biological role, the B regulatory subunit might modulate substrate selectivity and catalytic activity, and might also direct the localization of the catalytic enzyme to a particular subcellular compartment. The polypeptide is Serine/threonine-protein phosphatase 2A 55 kDa regulatory subunit B gamma isoform (PPP2R2C) (Oryctolagus cuniculus (Rabbit)).